The sequence spans 1858 residues: Inactive histone-lysine N-methyltransferase 2E (1858 aa).

An HCFC1-binding motif (HBM) motif is present at residues 63–66; sequence DHNY. The segment at 118–166 adopts a PHD-type zinc-finger fold; it reads VTRCICGFTHDDGYMICCDKCSVWQHIDCMGIDRQHIPDTYLCERCQPR. Zn(2+) is bound by residues cysteine 121, cysteine 123, cysteine 135, cysteine 138, histidine 143, cysteine 146, cysteine 160, and cysteine 163. Positions 217 to 269 are disordered; it reads ASRVSKVNDKRRKKSGEKEQHISKCKKAFREGSRKSSRVKGSAPEIDPSSDGS. Residues 232 to 250 are compositionally biased toward basic and acidic residues; it reads GEKEQHISKCKKAFREGSR. The SET domain maps to 330–447; it reads PPVESHIQKN…KGTEITIAFD (118 aa). O-linked (GlcNAc) serine glycosylation occurs at serine 435. Threonine 440 carries O-linked (GlcNAc) threonine glycosylation. Positions 475 to 530 are disordered; that stretch reads SESMENINSGYETRRKKGKKDKDISKEKDTQNQNITLDCEGTTNKMKSPETKQRKL. Basic and acidic residues predominate over residues 494 to 504; sequence KDKDISKEKDT. Residues 505–520 show a composition bias toward polar residues; sequence QNQNITLDCEGTTNKM. Residues 559 to 615 adopt a coiled-coil conformation; the sequence is VEMESEEQIAERKRKMTREERKMEAILQAFARLEKREKRREQALERISTAKTEVKTE. Serine 623 carries the post-translational modification Phosphoserine. The segment at 630 to 687 is disordered; sequence EQAKEENASKPTPAKVNRTKQRKSFSRSRTHIGQQRRRHRTVSMCSDIQPSSPDIEVT. Over residues 646 to 670 the composition is skewed to basic residues; the sequence is NRTKQRKSFSRSRTHIGQQRRRHRT. Positions 672–687 are enriched in polar residues; sequence SMCSDIQPSSPDIEVT. 2 positions are modified to phosphoserine: serine 837 and serine 845. 2 stretches are compositionally biased toward low complexity: residues 887-901 and 933-957; these read TSTP…PTHT and PVTP…PESS. Disordered regions lie at residues 887 to 960 and 1039 to 1068; these read TSTP…SPEI and LETP…SSWV. Positions 1039 to 1048 are enriched in basic and acidic residues; it reads LETPAHDRAE. Polar residues predominate over residues 1049 to 1068; the sequence is PNSQLDSTHSGRGTMYSSWV. Serine 1070 carries the post-translational modification Phosphoserine. Disordered regions lie at residues 1164-1561 and 1581-1835; these read KRQR…QNQQ and VFTS…PVPG. 2 stretches are compositionally biased toward polar residues: residues 1186–1206 and 1222–1235; these read PHAS…NDNG and TVYN…SNNC. Phosphoserine is present on serine 1273. A compositionally biased stretch (basic and acidic residues) spans 1273-1282; it reads SDHRKDKDSG. Low complexity-rich tracts occupy residues 1285 to 1303 and 1349 to 1362; these read SPCV…SSHS and KSPP…SPGS. Serine 1359 carries the phosphoserine modification. 2 stretches are compositionally biased toward polar residues: residues 1400-1432 and 1506-1542; these read QQKQ…SQKL and LPAN…LNST. Pro residues predominate over residues 1543–1553; sequence APPPPPPPPPS. A compositionally biased stretch (polar residues) spans 1581–1599; the sequence is VFTSGPNQALPGTTSQQTV. The segment covering 1626–1637 has biased composition (pro residues); sequence VPPPPPPPPAPG. Residues 1642–1651 show a composition bias toward polar residues; that stretch reads QQPNSHQQHS. A compositionally biased stretch (pro residues) spans 1677 to 1687; that stretch reads LPPPPPPPGPA. The segment covering 1698–1711 has biased composition (polar residues); that stretch reads TGLQGLQAQHQHVV. Over residues 1714-1724 the composition is skewed to pro residues; that stretch reads APPPPPPPPPS. A compositionally biased stretch (polar residues) spans 1798–1808; that stretch reads QGPNSIPTPTA.

This sequence belongs to the class V-like SAM-binding methyltransferase superfamily. Histone-lysine methyltransferase family. TRX/MLL subfamily. In terms of assembly, component of a complex composed of KMT2E (isoform 3), OGT and USP7; the complex stabilizes KMT2E, preventing KMT2E ubiquitination and proteasomal-mediated degradation. Isoform 3 interacts (via N-terminus) with OGT (via TRP repeats). Isoform 3 interacts with deubiquitinating enzyme USP7 (via MATH domain). Isoform 3 interacts (via HBM motif) with HCFC1 (via Kelch domain). Isoform 3 interacts with E2F1; the interaction is probably indirect and is mediated via HCFC1. Post-translationally, ubiquitinated. Deubiquitinated by USP7. O-glycosylated at Ser-435 and Thr-440 in the SET domain by OGT which probably prevents KMT2E proteasomal-mediated degradation. As to expression, widely expressed in both adult and fetal tissues. Highest levels of expression observed in fetal thymus and kidney and in adult hematopoietic tissues, jejunum and cerebellum. Isoform NKp44L: Not detected on circulating cells from healthy individuals, but is expressed on a large panel of tumor and transformed cells.

The protein resides in the chromosome. Its subcellular location is the cytoplasm. It localises to the cytoskeleton. The protein localises to the microtubule organizing center. It is found in the centrosome. The protein resides in the nucleus speckle. Its subcellular location is the nucleus. It localises to the nucleoplasm. The protein localises to the cell membrane. Its function is as follows. Associates with chromatin regions downstream of transcriptional start sites of active genes and thus regulates gene transcription. Chromatin interaction is mediated via the binding to tri-methylated histone H3 at 'Lys-4' (H3K4me3). Key regulator of hematopoiesis involved in terminal myeloid differentiation and in the regulation of hematopoietic stem cell (HSCs) self-renewal by a mechanism that involves DNA methylation. Also acts as an important cell cycle regulator, participating in cell cycle regulatory network machinery at multiple cell cycle stages including G1/S transition, S phase progression and mitotic entry. Recruited to E2F1 responsive promoters by HCFC1 where it stimulates tri-methylation of histone H3 at 'Lys-4' and transcriptional activation and thereby facilitates G1 to S phase transition. During myoblast differentiation, required to suppress inappropriate expression of S-phase-promoting genes and maintain expression of determination genes in quiescent cells. Functionally, cellular ligand for NCR2/NKp44, may play a role as a danger signal in cytotoxicity and NK-cell-mediated innate immunity. The protein is Inactive histone-lysine N-methyltransferase 2E (KMT2E) of Homo sapiens (Human).